Consider the following 223-residue polypeptide: UPF0441 protein KPN78578_33850 (223 aa).

Residues 165-223 (SYGAAQPGRTMNVPKTAMAPKPATTTTVTRGGFGESVAKQSTMQRSAAGSTSSSRSMGG) form a disordered region. 2 stretches are compositionally biased toward low complexity: residues 177–193 (VPKTAMAPKPATTTTVT) and 209–223 (RSAAGSTSSSRSMGG).

It belongs to the UPF0441 family.

This chain is UPF0441 protein KPN78578_33850, found in Klebsiella pneumoniae subsp. pneumoniae (strain ATCC 700721 / MGH 78578).